The sequence spans 213 residues: ATP phosphoribosyltransferase (213 aa).

This sequence belongs to the ATP phosphoribosyltransferase family. Short subfamily. Heteromultimer composed of HisG and HisZ subunits.

Its subcellular location is the cytoplasm. It carries out the reaction 1-(5-phospho-beta-D-ribosyl)-ATP + diphosphate = 5-phospho-alpha-D-ribose 1-diphosphate + ATP. It functions in the pathway amino-acid biosynthesis; L-histidine biosynthesis; L-histidine from 5-phospho-alpha-D-ribose 1-diphosphate: step 1/9. Functionally, catalyzes the condensation of ATP and 5-phosphoribose 1-diphosphate to form N'-(5'-phosphoribosyl)-ATP (PR-ATP). Has a crucial role in the pathway because the rate of histidine biosynthesis seems to be controlled primarily by regulation of HisG enzymatic activity. The polypeptide is ATP phosphoribosyltransferase (Shouchella clausii (strain KSM-K16) (Alkalihalobacillus clausii)).